The chain runs to 640 residues: Threonine--tRNA ligase (640 aa).

A TGS domain is found at 1–61 (MPTITLPDGS…ENDASLQIIT (61 aa)). Residues 242–533 (DHRKIGKRLG…LIEHYEGAFP (292 aa)) are catalytic. Zn(2+)-binding residues include cysteine 333, histidine 384, and histidine 510.

Belongs to the class-II aminoacyl-tRNA synthetase family. Homodimer. Zn(2+) is required as a cofactor.

The protein localises to the cytoplasm. It carries out the reaction tRNA(Thr) + L-threonine + ATP = L-threonyl-tRNA(Thr) + AMP + diphosphate + H(+). Functionally, catalyzes the attachment of threonine to tRNA(Thr) in a two-step reaction: L-threonine is first activated by ATP to form Thr-AMP and then transferred to the acceptor end of tRNA(Thr). Also edits incorrectly charged L-seryl-tRNA(Thr). The sequence is that of Threonine--tRNA ligase from Pseudomonas savastanoi pv. phaseolicola (strain 1448A / Race 6) (Pseudomonas syringae pv. phaseolicola (strain 1448A / Race 6)).